We begin with the raw amino-acid sequence, 189 residues long: UPF0251 protein MTH_1178 (189 aa).

It belongs to the UPF0251 family.

In Methanothermobacter thermautotrophicus (strain ATCC 29096 / DSM 1053 / JCM 10044 / NBRC 100330 / Delta H) (Methanobacterium thermoautotrophicum), this protein is UPF0251 protein MTH_1178.